Here is a 312-residue protein sequence, read N- to C-terminus: Methionyl-tRNA formyltransferase (312 aa).

109–112 (SILP) contributes to the (6S)-5,6,7,8-tetrahydrofolate binding site.

Belongs to the Fmt family.

The enzyme catalyses L-methionyl-tRNA(fMet) + (6R)-10-formyltetrahydrofolate = N-formyl-L-methionyl-tRNA(fMet) + (6S)-5,6,7,8-tetrahydrofolate + H(+). Attaches a formyl group to the free amino group of methionyl-tRNA(fMet). The formyl group appears to play a dual role in the initiator identity of N-formylmethionyl-tRNA by promoting its recognition by IF2 and preventing the misappropriation of this tRNA by the elongation apparatus. This Dictyoglomus thermophilum (strain ATCC 35947 / DSM 3960 / H-6-12) protein is Methionyl-tRNA formyltransferase.